The following is a 191-amino-acid chain: UPF0312 protein PA0423 (191 aa).

Positions 1–23 (MLKKTLAALALGSALFTAGQAMA) are cleaved as a signal peptide.

This sequence belongs to the UPF0312 family. Type 1 subfamily.

It is found in the periplasm. The sequence is that of UPF0312 protein PA0423 from Pseudomonas aeruginosa (strain ATCC 15692 / DSM 22644 / CIP 104116 / JCM 14847 / LMG 12228 / 1C / PRS 101 / PAO1).